The sequence spans 574 residues: Phosphate permease PHO89 (574 aa).

The Extracellular segment spans residues 1–5 (MALHQ). A helical transmembrane segment spans residues 6 to 26 (FDYIFAIAMLFAFLDAFNIGA). Topologically, residues 27–43 (NDVANSFASSISSRSLK) are cytoplasmic. A helical membrane pass occupies residues 44–64 (YWQAMVLAGLCEFLGAVLAGA). At 65–84 (RVSGTIKNNIIDSSIFTNDP) the chain is on the extracellular side. A helical membrane pass occupies residues 85-105 (AVLMLTMTSALIGSSCWLTFA). Over 106–117 (TAIGMPVSTTHS) the chain is Cytoplasmic. The helical transmembrane segment at 118 to 138 (IVGGTIGAGIAAGGANGVVWG) threads the bilayer. Residues 139–145 (WSGVSQI) are Extracellular-facing. The chain crosses the membrane as a helical span at residues 146 to 166 (IASWFIAPILAGAIAAIVFSI). Over 167 to 184 (SRFSVLEVKSLERSIKNA) the chain is Cytoplasmic. A helical transmembrane segment spans residues 185–205 (LLLVGVLVFATFSILTMLIVW). At 206 to 222 (KGSPNLHLDDLSETETA) the chain is on the extracellular side. The chain crosses the membrane as a helical span at residues 223 to 243 (VSIVLTGAIASIVYFIFFYPF). The Cytoplasmic portion of the chain corresponds to 244 to 354 (YRRKVLDQDW…SLLKQGPKKW (111 aa)). Residues 301-332 (EDEENKAASNSNDSVKNKEDIQEVDLVRTETE) are disordered. Basic and acidic residues predominate over residues 315–332 (VKNKEDIQEVDLVRTETE). The helical transmembrane segment at 355-375 (PLLFWLVISHGWTQDVIHAQV) threads the bilayer. The Extracellular portion of the chain corresponds to 376–398 (NDRDMLSGDLKGMYERSKFYDNR). Residues 399-419 (VEYIYSVLQAITAATMSFAHG) traverse the membrane as a helical segment. Over 420 to 447 (ANDVANATGPLSAVYVIWKTNTIGAKSE) the chain is Cytoplasmic. A helical membrane pass occupies residues 448–468 (VPVWVLAYGGVALVIGCWTYG). Over 469-503 (YNIIKNLGNKMILQSPSRGFSIELAVAITTVMATQ) the chain is Extracellular. Residues 504-524 (LGIPTSTTQIAVGGIVAVGLC) traverse the membrane as a helical segment. Residues 525–541 (NKDLKSVNWRMVAWCYS) are Cytoplasmic-facing. A helical transmembrane segment spans residues 542–562 (GWFLTLPIAGLIAGIINGIIL). The Extracellular segment spans residues 563–574 (NAPRFGVEYQMT).

It belongs to the inorganic phosphate transporter (PiT) (TC 2.A.20) family. In terms of assembly, forms homodimers and higher order homooligomers.

It is found in the cell membrane. The catalysed reaction is 2 Na(+)(out) + phosphate(out) = 2 Na(+)(in) + phosphate(in). With respect to regulation, weakly stimulated by Li(+) and K(+). Inhibited by monensin. Inhibited by phosphonoacetic acid. Inhibited by methylphosphonate. Inhibited by dimethylphosphonate. Its function is as follows. Sodium-phosphate symporter. Active in early growth phase. This is Phosphate permease PHO89 (PHO89) from Saccharomyces cerevisiae (strain ATCC 204508 / S288c) (Baker's yeast).